The following is a 131-amino-acid chain: Small ribosomal subunit protein uS11 (131 aa).

Belongs to the universal ribosomal protein uS11 family. In terms of assembly, part of the 30S ribosomal subunit. Interacts with proteins S7 and S18. Binds to IF-3.

Functionally, located on the platform of the 30S subunit, it bridges several disparate RNA helices of the 16S rRNA. Forms part of the Shine-Dalgarno cleft in the 70S ribosome. This chain is Small ribosomal subunit protein uS11, found in Halorhodospira halophila (strain DSM 244 / SL1) (Ectothiorhodospira halophila (strain DSM 244 / SL1)).